Reading from the N-terminus, the 196-residue chain is Small nuclear ribonucleoprotein-associated protein B (196 aa).

The 95-residue stretch at 7 to 101 (AHSSRLANLI…ILSTVVEDKP (95 aa)) folds into the Sm domain. The short motif at 105–132 (KKERLVRDKKEKKQAQKQTKLRKEKEKK) is the Nuclear localization signal element. Positions 108–118 (RLVRDKKEKKQ) are enriched in basic and acidic residues. Residues 108–196 (RLVRDKKEKK…FQPPPGFKRK (89 aa)) form a disordered region. Polar residues predominate over residues 140–181 (NTANAKHTSSNSREIAQPSSSRYNGGNDNIGANRSRFNNEAP).

Belongs to the snRNP SmB/SmN family. Component of the Sm core complex, present in spliceosomal snRNP U1, U2, U4/U6 and U5. The core complex contains SMB1, SMD1, SMD2, SMD3, SME1, SMX3 and SMX2 (Sm proteins B, D1, D2, D3, E, F and G, respectively), and is probably a heptameric ring structure. SMB1 specifically interacts with SMD3. Belongs to the CWC complex (or CEF1-associated complex), a spliceosome sub-complex reminiscent of a late-stage spliceosome composed of the U2, U5 and U6 snRNAs and at least BUD13, BUD31, BRR2, CDC40, CEF1, CLF1, CUS1, CWC2, CWC15, CWC21, CWC22, CWC23, CWC24, CWC25, CWC27, ECM2, HSH155, IST3, ISY1, LEA1, MSL1, NTC20, PRP8, PRP9, PRP11, PRP19, PRP21, PRP22, PRP45, PRP46, SLU7, SMB1, SMD1, SMD2, SMD3, SMX2, SMX3, SNT309, SNU114, SPP2, SYF1, SYF2, RSE1 and YJU2. Component of the U4/U6-U5 tri-snRNP complex composed of the U4, U6 and U5 snRNAs and at least PRP3, PRP4, PRP6, PRP8, PRP18, PRP38, SNU13, SNU23, SNU66, SNU114, SPP381, SMB1, SMD1, SMD2, SMD3, SMX2, SMX3, LSM2, LSM3, LSM4, LSM5, LSM6, LSM7, LSM8, BRR2 and DIB1. Interacts with the trimethylguanosine synthase TGS1.

It localises to the nucleus. Its subcellular location is the cytoplasm. In terms of biological role, plays a role in pre-mRNA splicing as a core component of the spliceosomal U1, U2, U4 and U5 small nuclear ribonucleoproteins (snRNPs), the building blocks of the spliceosome. In Saccharomyces cerevisiae (strain ATCC 204508 / S288c) (Baker's yeast), this protein is Small nuclear ribonucleoprotein-associated protein B (SMB1).